The following is a 620-amino-acid chain: Nuclear cap-binding protein subunit 3 (620 aa).

Lys12 is covalently cross-linked (Glycyl lysine isopeptide (Lys-Gly) (interchain with G-Cter in SUMO2)). Residues 15 to 28 (APAGPALGLPSPEA) are compositionally biased toward low complexity. Residues 15–42 (APAGPALGLPSPEAESGVDRGEPEPMEV) form a disordered region. Ser25 carries the post-translational modification Phosphoserine. Residue Lys70 forms a Glycyl lysine isopeptide (Lys-Gly) (interchain with G-Cter in SUMO2) linkage. The residue at position 73 (Ser73) is a Phosphoserine. Positions 126–187 (ETIYICGVDE…MSSLPAQDKI (62 aa)) are RNA recognition motif (RRM) domain. Positions 155 to 158 (WLDD) match the WLDD motif; essential for 7-methylguanosine-containing mRNA cap binding motif. Basic and acidic residues predominate over residues 185 to 198 (DKIRSRDASEDKSA). Disordered stretches follow at residues 185–233 (DKIR…LDTL), 332–419 (HSGL…PKKS), and 436–620 (IRNS…EAES). Lys186 participates in a covalent cross-link: Glycyl lysine isopeptide (Lys-Gly) (interchain with G-Cter in SUMO2). Ser209 and Ser210 each carry phosphoserine. Acidic residues-rich tracts occupy residues 209 to 230 (SSDDDEAEEGEVEDENSSDVEL) and 341 to 365 (EPIEEEEEEEEEEEEEEEEDQDMDA). Basic and acidic residues predominate over residues 366–388 (DDRVVVEYHEELPALKQPRERSA). At Thr413 the chain carries Phosphothreonine. Ser415 is subject to Phosphoserine. Basic and acidic residues-rich tracts occupy residues 459-474 (PPEKFADVRHLLDEKR) and 511-521 (VRREPSSDVHS). Lys541 is covalently cross-linked (Glycyl lysine isopeptide (Lys-Gly) (interchain with G-Cter in SUMO2)). Composition is skewed to basic and acidic residues over residues 554 to 569 (KTKEKNTKKVDHRAPG) and 585 to 598 (IKEKEQSRQKKSRL). The segment covering 611-620 (ESSSGSEAES) has biased composition (low complexity). Ser620 carries the phosphoserine modification.

It belongs to the NCBP3 family. As to quaternary structure, component of an alternative cap-binding complex (CBC) composed of NCBP1/CBP80 and NCBP3. Interacts with SRRT, KPNA3, THOC5 and EIF4A3.

It is found in the nucleus. The protein resides in the cytoplasm. Associates with NCBP1/CBP80 to form an alternative cap-binding complex (CBC) which plays a key role in mRNA export. NCBP3 serves as adapter protein linking the capped RNAs (m7GpppG-capped RNA) to NCBP1/CBP80. Unlike the conventional CBC with NCBP2 which binds both small nuclear RNA (snRNA) and messenger (mRNA) and is involved in their export from the nucleus, the alternative CBC with NCBP3 does not bind snRNA and associates only with mRNA thereby playing a role in only mRNA export. The alternative CBC is particularly important in cellular stress situations such as virus infections and the NCBP3 activity is critical to inhibit virus growth. The polypeptide is Nuclear cap-binding protein subunit 3 (Homo sapiens (Human)).